The primary structure comprises 289 residues: GTPase Era (289 aa).

Residues lysine 2–glutamate 167 enclose the Era-type G domain. The segment at glycine 10–serine 17 is G1. Residue glycine 10–serine 17 coordinates GTP. The tract at residues asparagine 36–arginine 40 is G2. Residues aspartate 57 to glycine 60 are G3. GTP-binding positions include aspartate 57 to leucine 61 and threonine 116 to aspartate 119. Residues threonine 116 to aspartate 119 are G4. The interval valine 146–isoleucine 148 is G5. The KH type-2 domain occupies tyrosine 186 to lysine 274.

It belongs to the TRAFAC class TrmE-Era-EngA-EngB-Septin-like GTPase superfamily. Era GTPase family. Monomer.

The protein localises to the cytoplasm. It localises to the cell inner membrane. An essential GTPase that binds both GDP and GTP, with rapid nucleotide exchange. Plays a role in 16S rRNA processing and 30S ribosomal subunit biogenesis and possibly also in cell cycle regulation and energy metabolism. This is GTPase Era from Campylobacter hominis (strain ATCC BAA-381 / DSM 21671 / CCUG 45161 / LMG 19568 / NCTC 13146 / CH001A).